The primary structure comprises 176 residues: PRELI domain-containing protein 2 (176 aa).

The PRELI/MSF1 domain maps to 1 to 175 (MGIAVEVRKV…ILRERCGCPF (175 aa)).

This chain is PRELI domain-containing protein 2 (prelid2), found in Xenopus laevis (African clawed frog).